A 292-amino-acid polypeptide reads, in one-letter code: GTP cyclohydrolase FolE2 (292 aa).

This sequence belongs to the GTP cyclohydrolase IV family.

It carries out the reaction GTP + H2O = 7,8-dihydroneopterin 3'-triphosphate + formate + H(+). It participates in cofactor biosynthesis; 7,8-dihydroneopterin triphosphate biosynthesis; 7,8-dihydroneopterin triphosphate from GTP: step 1/1. Functionally, converts GTP to 7,8-dihydroneopterin triphosphate. This chain is GTP cyclohydrolase FolE2, found in Staphylococcus aureus (strain Newman).